A 103-amino-acid chain; its full sequence is Small ribosomal subunit protein uS10 (103 aa).

This sequence belongs to the universal ribosomal protein uS10 family. As to quaternary structure, part of the 30S ribosomal subunit.

Involved in the binding of tRNA to the ribosomes. This Psychromonas ingrahamii (strain DSM 17664 / CCUG 51855 / 37) protein is Small ribosomal subunit protein uS10.